Reading from the N-terminus, the 493-residue chain is MTCGFSTVGSGFGSRAFSCVSACGPRPGRCCITAAPYRGISCYRGLTGGFGSRSVCGGFRAGYCSRSFGYRSGGVGGLSPPCITTVSVNESLLTPLNLEIDPNAQCVKQEEKEQIKCLNNRFAAFIDKVRFLEQQNKLLETKLQFYQNRQCCESNLEPLFEGYIETLRREAECVEADSGRLSSELNHVQEVLEGYKKKYEEEVALRATAENEFVALKKDVDCAYIRKSDLEANSEALIQEIDFLRRLYEEEIRVLQANISDTSVIVKMDNSRGLNMDNIVAEIKAQYDDIASRSRAEAESWYRSKCEEIKATVIRHGETLRRTKEEINELNRLIQRLTAEVENAKCQNSKLEAAVTQAEQQGEVALNDARCKLAGLEEALQKAKQDMACLLKEYQEVMNSKLGLDIEIATYRRLLEGEEQRLCEGVGAVNVCVSSSRGGVVCGDLCVSGSRPVTGSVCSAPCSGNLAVSTGLCAPCGQLNTTCGGGSCSLGRC.

A head region spans residues 1-111 (MTCGFSTVGS…PNAQCVKQEE (111 aa)). The 312-residue stretch at 111-422 (EKEQIKCLNN…RLLEGEEQRL (312 aa)) folds into the IF rod domain. Positions 112–146 (KEQIKCLNNRFAAFIDKVRFLEQQNKLLETKLQFY) are coil 1A. The linker 1 stretch occupies residues 147–156 (QNRQCCESNL). A coil 1B region spans residues 157–257 (EPLFEGYIET…YEEEIRVLQA (101 aa)). Lys217 participates in a covalent cross-link: Glycyl lysine isopeptide (Lys-Gly) (interchain with G-Cter in SUMO1). The interval 258–274 (NISDTSVIVKMDNSRGL) is linker 12. The coil 2 stretch occupies residues 275–418 (NMDNIVAEIK…ATYRRLLEGE (144 aa)). Residues 419–493 (EQRLCEGVGA…GGGSCSLGRC (75 aa)) form a tail region.

It belongs to the intermediate filament family. As to quaternary structure, heterotetramer of two type I and two type II keratins.

The polypeptide is Keratin, type II cuticular Hb3 (Bos taurus (Bovine)).